Reading from the N-terminus, the 224-residue chain is Ribosome maturation factor RimP (224 aa).

Positions Arg194–Glu224 are disordered. The segment covering Leu203–Asp213 has biased composition (acidic residues).

The protein belongs to the RimP family.

The protein localises to the cytoplasm. Its function is as follows. Required for maturation of 30S ribosomal subunits. The protein is Ribosome maturation factor RimP of Brucella anthropi (strain ATCC 49188 / DSM 6882 / CCUG 24695 / JCM 21032 / LMG 3331 / NBRC 15819 / NCTC 12168 / Alc 37) (Ochrobactrum anthropi).